A 103-amino-acid chain; its full sequence is Co-chaperonin GroES (103 aa).

This sequence belongs to the GroES chaperonin family. As to quaternary structure, heptamer of 7 subunits arranged in a ring. Interacts with the chaperonin GroEL.

Its subcellular location is the cytoplasm. In terms of biological role, together with the chaperonin GroEL, plays an essential role in assisting protein folding. The GroEL-GroES system forms a nano-cage that allows encapsulation of the non-native substrate proteins and provides a physical environment optimized to promote and accelerate protein folding. GroES binds to the apical surface of the GroEL ring, thereby capping the opening of the GroEL channel. In Thermosynechococcus vestitus (strain NIES-2133 / IAM M-273 / BP-1), this protein is Co-chaperonin GroES.